An 866-amino-acid polypeptide reads, in one-letter code: Protein translocase subunit SecA (866 aa).

Residues glutamine 87, glycine 105–threonine 109, and aspartate 514 contribute to the ATP site. Positions valine 819–tyrosine 858 are disordered. Zn(2+) is bound by residues cysteine 850, cysteine 852, cysteine 861, and cysteine 862.

Belongs to the SecA family. Monomer and homodimer. Part of the essential Sec protein translocation apparatus which comprises SecA, SecYEG and auxiliary proteins SecDF. Other proteins may also be involved. It depends on Zn(2+) as a cofactor.

It localises to the cell inner membrane. The protein localises to the cytoplasm. The catalysed reaction is ATP + H2O + cellular proteinSide 1 = ADP + phosphate + cellular proteinSide 2.. Functionally, part of the Sec protein translocase complex. Interacts with the SecYEG preprotein conducting channel. Has a central role in coupling the hydrolysis of ATP to the transfer of proteins into and across the cell membrane, serving as an ATP-driven molecular motor driving the stepwise translocation of polypeptide chains across the membrane. This chain is Protein translocase subunit SecA, found in Elusimicrobium minutum (strain Pei191).